The following is a 217-amino-acid chain: Elongation factor Ts (217 aa).

An involved in Mg(2+) ion dislocation from EF-Tu region spans residues 81-84 (TDFV).

Belongs to the EF-Ts family.

The protein resides in the cytoplasm. Functionally, associates with the EF-Tu.GDP complex and induces the exchange of GDP to GTP. It remains bound to the aminoacyl-tRNA.EF-Tu.GTP complex up to the GTP hydrolysis stage on the ribosome. The polypeptide is Elongation factor Ts (Myxococcus xanthus (strain DK1622)).